A 211-amino-acid chain; its full sequence is MPIQEIRHPLIRHKLGLLRRAEISTKNFRELAQEVTMLLTYEATKDLQLVDHEIDGWVGKVKTQRIAGKKITIVPILRAGIGMLEGVLNLIPSAKVSVLGLERDEETLEARTYYKKLVPDVANRIAMIIDPMLATGSSLIAAIDVLKASGCKDIRVMVLVAAPEGVKKVQAKHPEVEIYTASIDDGLNEHGYIVPGLGDAGDKIFGSVQKD.

5-phospho-alpha-D-ribose 1-diphosphate contacts are provided by residues R78, R103, and 130 to 138 (DPMLATGSS). Residues I193 and 198–200 (GDA) contribute to the uracil site. Residue D199 participates in 5-phospho-alpha-D-ribose 1-diphosphate binding.

This sequence belongs to the UPRTase family. Requires Mg(2+) as cofactor.

It carries out the reaction UMP + diphosphate = 5-phospho-alpha-D-ribose 1-diphosphate + uracil. It functions in the pathway pyrimidine metabolism; UMP biosynthesis via salvage pathway; UMP from uracil: step 1/1. Allosterically activated by GTP. In terms of biological role, catalyzes the conversion of uracil and 5-phospho-alpha-D-ribose 1-diphosphate (PRPP) to UMP and diphosphate. In Acinetobacter baylyi (strain ATCC 33305 / BD413 / ADP1), this protein is Uracil phosphoribosyltransferase.